Consider the following 502-residue polypeptide: MMDGRSILMGRYEVGKQLGQGTFAKVYYARNLTTGQAVAIKMINKDKVMKVGLMEQIKREISIMRLVKHPNVLQLFEVMASKSKIYFVLEYAKGGELFNKIAKEGKLSEDSARRYFHQLINAVDYCHSRGVYHRDLKPENLLLDENENLKVSDFGLSALAESKRQDGLLHTTCGTPAYVAPEVLSRKGYDGAKADVWSCGVILFVLVAGYLPFHDPNLIEMYRKICRADFRCPRYFSAELKDLIHKILDSDPSTRISIPRIKRSTWYRKPVEINAKNSEAATTNSISSGVATTSGSAECSTSEENQGSLSLPNLNAFDIISLSTGFNLSGFFEDTHGHQEERFTTRQPVTTVLGKLKELAKRLKLKVKKKDNGVLRLAAPKEGKKGFLELDAEIFEVTPSFLLVELKKTNGDTMEYRKLVKEDIRPALKDIVWVWQGDEHLNSQSILQGEQQQSPLPPELPQDQLQPSLPQQEKQDMPEPPLLPQVPQEEVQTSIPAEQTKN.

Positions 12-267 (YEVGKQLGQG…IPRIKRSTWY (256 aa)) constitute a Protein kinase domain. ATP contacts are provided by residues 18–26 (LGQGTFAKV) and K41. D135 functions as the Proton acceptor in the catalytic mechanism. An activation loop region spans residues 153 to 182 (DFGLSALAESKRQDGLLHTTCGTPAYVAPE). Positions 297-333 (AECSTSEENQGSLSLPNLNAFDIISLSTGFNLSGFFE) constitute an NAF domain. Positions 339–367 (QEERFTTRQPVTTVLGKLKELAKRLKLKV) are PPI. The segment at 447–502 (LQGEQQQSPLPPELPQDQLQPSLPQQEKQDMPEPPLLPQVPQEEVQTSIPAEQTKN) is disordered. Residues 461–472 (PQDQLQPSLPQQ) show a composition bias toward low complexity. Over residues 493–502 (TSIPAEQTKN) the composition is skewed to polar residues.

It belongs to the protein kinase superfamily. CAMK Ser/Thr protein kinase family. SNF1 subfamily. It depends on Mn(2+) as a cofactor.

The catalysed reaction is L-seryl-[protein] + ATP = O-phospho-L-seryl-[protein] + ADP + H(+). It catalyses the reaction L-threonyl-[protein] + ATP = O-phospho-L-threonyl-[protein] + ADP + H(+). Its function is as follows. CIPK serine-threonine protein kinases interact with CBL proteins. Binding of a CBL protein to the regulatory NAF domain of CIPK protein lead to the activation of the kinase in a calcium-dependent manner. In Oryza sativa subsp. japonica (Rice), this protein is CBL-interacting protein kinase 11 (CIPK11).